The following is a 402-amino-acid chain: Leucine aminopeptidase 1 (402 aa).

Residues 1–18 (MKISNASLLALLLPAASA) form the signal peptide. The propeptide occupies 19–92 (RFVEQAEQNR…GTFNKRPYKK (74 aa)). 2 N-linked (GlcNAc...) asparagine glycosylation sites follow: asparagine 111 and asparagine 184. Histidine 192, aspartate 211, glutamate 250, and aspartate 277 together coordinate Zn(2+). A glycan (N-linked (GlcNAc...) asparagine) is linked at asparagine 304. Residues cysteine 326 and cysteine 330 are joined by a disulfide bond. Histidine 359 is a binding site for Zn(2+).

It belongs to the peptidase M28 family. M28E subfamily. In terms of assembly, monomer. Zn(2+) serves as cofactor.

Its subcellular location is the secreted. Its function is as follows. Extracellular aminopeptidase that allows assimilation of proteinaceous substrates. This is Leucine aminopeptidase 1 (lap1) from Neurospora crassa (strain ATCC 24698 / 74-OR23-1A / CBS 708.71 / DSM 1257 / FGSC 987).